The chain runs to 484 residues: UDP-N-acetylmuramate--L-alanine ligase (484 aa).

Position 127–133 (127–133 (GTHGKTT)) interacts with ATP.

This sequence belongs to the MurCDEF family.

It is found in the cytoplasm. The enzyme catalyses UDP-N-acetyl-alpha-D-muramate + L-alanine + ATP = UDP-N-acetyl-alpha-D-muramoyl-L-alanine + ADP + phosphate + H(+). It participates in cell wall biogenesis; peptidoglycan biosynthesis. Cell wall formation. The chain is UDP-N-acetylmuramate--L-alanine ligase from Shewanella amazonensis (strain ATCC BAA-1098 / SB2B).